We begin with the raw amino-acid sequence, 180 residues long: Large ribosomal subunit protein uL5 (180 aa).

Belongs to the universal ribosomal protein uL5 family. As to quaternary structure, part of the 50S ribosomal subunit; part of the 5S rRNA/L5/L18/L25 subcomplex. Contacts the 5S rRNA and the P site tRNA. Forms a bridge to the 30S subunit in the 70S ribosome.

In terms of biological role, this is one of the proteins that bind and probably mediate the attachment of the 5S RNA into the large ribosomal subunit, where it forms part of the central protuberance. In the 70S ribosome it contacts protein S13 of the 30S subunit (bridge B1b), connecting the 2 subunits; this bridge is implicated in subunit movement. Contacts the P site tRNA; the 5S rRNA and some of its associated proteins might help stabilize positioning of ribosome-bound tRNAs. In Streptococcus thermophilus (strain CNRZ 1066), this protein is Large ribosomal subunit protein uL5.